A 450-amino-acid polypeptide reads, in one-letter code: Na(+)/H(+) antiporter NhaA 2 (450 aa).

The next 12 membrane-spanning stretches (helical) occupy residues Val43–Trp63, Leu86–Leu106, Ala124–Val144, Gly155–Ser175, Phe185–Tyr205, Glu208–Val228, Ser234–Val254, Val258–Pro278, Val299–Leu319, Pro326–Thr346, Trp364–Ile384, and Phe398–Leu418.

The protein belongs to the NhaA Na(+)/H(+) (TC 2.A.33) antiporter family.

It localises to the cell membrane. It carries out the reaction Na(+)(in) + 2 H(+)(out) = Na(+)(out) + 2 H(+)(in). Na(+)/H(+) antiporter that extrudes sodium in exchange for external protons. This is Na(+)/H(+) antiporter NhaA 2 from Mycobacterium sp. (strain JLS).